Reading from the N-terminus, the 419-residue chain is UDP-N-acetylglucosamine 1-carboxyvinyltransferase (419 aa).

22–23 (KN) serves as a coordination point for phosphoenolpyruvate. R91 lines the UDP-N-acetyl-alpha-D-glucosamine pocket. The active-site Proton donor is C115. A 2-(S-cysteinyl)pyruvic acid O-phosphothioketal modification is found at C115. Residues 120 to 124 (RPVDL), 160 to 163 (KVSV), D305, and V327 contribute to the UDP-N-acetyl-alpha-D-glucosamine site.

Belongs to the EPSP synthase family. MurA subfamily.

The protein localises to the cytoplasm. It carries out the reaction phosphoenolpyruvate + UDP-N-acetyl-alpha-D-glucosamine = UDP-N-acetyl-3-O-(1-carboxyvinyl)-alpha-D-glucosamine + phosphate. Its pathway is cell wall biogenesis; peptidoglycan biosynthesis. Cell wall formation. Adds enolpyruvyl to UDP-N-acetylglucosamine. The protein is UDP-N-acetylglucosamine 1-carboxyvinyltransferase of Shigella dysenteriae serotype 1 (strain Sd197).